We begin with the raw amino-acid sequence, 424 residues long: Tubulin-specific chaperone cofactor E-like protein (424 aa).

S18 and S41 each carry phosphoserine. LRR repeat units lie at residues 73–98 (CAHV…IVSN), 99–123 (VPQL…TCAG), 124–147 (SFSG…HTIL), 150–172 (LPDL…PSVC), 173–197 (CHSL…KLGV), 199–224 (FPSL…SLAR), and 226–250 (FPNL…KLNS). An LRRCT domain is found at 262-303 (IPLLQPYTTEERRKLVVARLPSVSKLNGSVVTDGEREDSERF). In terms of domain architecture, Ubiquitin-like spans 334–424 (AEVDLRPQSS…DKIFVESKTK (91 aa)). Residues 350–375 (FNDQVEEVSIRLDQTVAELKRQLKTL) are a coiled coil.

The protein resides in the cytoplasm. It is found in the cytoskeleton. Acts as a regulator of tubulin stability. The sequence is that of Tubulin-specific chaperone cofactor E-like protein (Tbcel) from Rattus norvegicus (Rat).